The primary structure comprises 273 residues: Pantothenate synthetase (273 aa).

27-34 (MGALHDGH) serves as a coordination point for ATP. His-34 serves as the catalytic Proton donor. Residue Gln-58 participates in (R)-pantoate binding. Position 58 (Gln-58) interacts with beta-alanine. 144–147 (GKKD) serves as a coordination point for ATP. Gln-150 lines the (R)-pantoate pocket. ATP-binding positions include Val-173 and 181–184 (LSSR).

It belongs to the pantothenate synthetase family. As to quaternary structure, homodimer.

It localises to the cytoplasm. It carries out the reaction (R)-pantoate + beta-alanine + ATP = (R)-pantothenate + AMP + diphosphate + H(+). Its pathway is cofactor biosynthesis; (R)-pantothenate biosynthesis; (R)-pantothenate from (R)-pantoate and beta-alanine: step 1/1. Functionally, catalyzes the condensation of pantoate with beta-alanine in an ATP-dependent reaction via a pantoyl-adenylate intermediate. The polypeptide is Pantothenate synthetase (Campylobacter curvus (strain 525.92)).